The sequence spans 137 residues: Small ribosomal subunit protein uS12 (137 aa).

3-methylthioaspartic acid is present on Asp-102.

It belongs to the universal ribosomal protein uS12 family. Part of the 30S ribosomal subunit. Contacts proteins S8 and S17. May interact with IF1 in the 30S initiation complex.

Its function is as follows. With S4 and S5 plays an important role in translational accuracy. In terms of biological role, interacts with and stabilizes bases of the 16S rRNA that are involved in tRNA selection in the A site and with the mRNA backbone. Located at the interface of the 30S and 50S subunits, it traverses the body of the 30S subunit contacting proteins on the other side and probably holding the rRNA structure together. The combined cluster of proteins S8, S12 and S17 appears to hold together the shoulder and platform of the 30S subunit. In Mycoplasmopsis agalactiae (strain NCTC 10123 / CIP 59.7 / PG2) (Mycoplasma agalactiae), this protein is Small ribosomal subunit protein uS12.